Here is a 428-residue protein sequence, read N- to C-terminus: MDDLNKYLINKGKKAKEASRFLSSVDSNFKNKALHKMGEDLKANMNKIIAANKIDMEKGKEKGLSKSLLDRLLIDEKRVNDMVNGLIEVAELPDPIGEVLNMWKRPNGINIGVKRVPLGVIGIIYEARPNVTVDATALCLKSGNAVILRGGSEAINTNKAIGKILENSAIESGLPEGTIQLIETTDREIVNKMLKLNEYIDVLIPRGGRGLIDNVVKNSTVPVIQTGVGLCHVYVDGSANLKMAQDIIVNAKTQRPGVCNALETLLVHKDVANSFLPEIVSEISKYGVESKLCEKSFEVVKGSIKDAKVLSLISEATEEDWDTEYLDLILSIKIVNSLDEALNHIYDHGTKHSEAIITENYTNSQRFLNEVDAAAVYVNASTRFTDGSQFGFGAEIGISTQKLHARGPMGLTQLTTTKYIIYGNGQIR.

The protein belongs to the gamma-glutamyl phosphate reductase family.

The protein localises to the cytoplasm. It catalyses the reaction L-glutamate 5-semialdehyde + phosphate + NADP(+) = L-glutamyl 5-phosphate + NADPH + H(+). The protein operates within amino-acid biosynthesis; L-proline biosynthesis; L-glutamate 5-semialdehyde from L-glutamate: step 2/2. Its function is as follows. Catalyzes the NADPH-dependent reduction of L-glutamate 5-phosphate into L-glutamate 5-semialdehyde and phosphate. The product spontaneously undergoes cyclization to form 1-pyrroline-5-carboxylate. The chain is Gamma-glutamyl phosphate reductase from Clostridium tetani (strain Massachusetts / E88).